The chain runs to 438 residues: DNA primase small subunit (438 aa).

Active-site residues include glutamate 63, aspartate 127, and aspartate 129. The short motif at 139–149 is the Zinc knuckle motif element; the sequence is CCSGAGVCLKC.

The protein belongs to the eukaryotic-type primase small subunit family. Heterodimer of a catalytic subunit Prim1 and a regulatory subunit Prim2, also known as the DNA primase complex. Component of the alpha DNA polymerase complex (also known as the alpha DNA polymerase-primase complex) consisting of four subunits: the catalytic subunit PolA1, the regulatory subunit PolA2, and the primase complex subunits Prim1 and Prim2 respectively. PolA1 associates with the DNA primase complex before association with PolA2. Mg(2+) is required as a cofactor. It depends on Mn(2+) as a cofactor. In terms of tissue distribution, expressed in embryos (at protein level).

The presence of the regulatory subunit Prim2 accelerates the kinetics of initiation and primer extension. Functionally, catalytic subunit of the DNA primase complex and component of the DNA polymerase alpha complex (also known as the alpha DNA polymerase-primase complex) which play an essential role in the initiation of DNA synthesis. During the S phase of the cell cycle, the DNA polymerase alpha complex (composed of a catalytic subunit PolA1, an accessory subunit PolA2 and two primase subunits, the catalytic subunit Prim1 and the regulatory subunit Prim2) is recruited to DNA at the replicative forks. The primase subunit of the polymerase alpha complex initiates DNA synthesis by oligomerising short RNA primers on both leading and lagging strands. These primers are initially extended by the polymerase alpha catalytic subunit and subsequently transferred to polymerase delta and polymerase epsilon for processive synthesis on the lagging and leading strand, respectively. In the primase complex, both subunits are necessary for the initial di-nucleotide formation, but the extension of the primer depends only on the catalytic subunit. Can add both ribo- and deoxynucleotides during elongation of the primers. Binds single stranded DNA. This is DNA primase small subunit from Drosophila melanogaster (Fruit fly).